The following is a 392-amino-acid chain: Odorant receptor 85f (392 aa).

Topologically, residues 1-36 are cytoplasmic; the sequence is MEPVQYSYEDFARLPTTVFWIMGYDMLGVPKTRSRR. Residues 37 to 57 form a helical membrane-spanning segment; that stretch reads ILYWIYRFLCLASHGVCVGVM. The Extracellular segment spans residues 58–69; sequence VFRMVEAKTIDN. N-linked (GlcNAc...) asparagine glycosylation occurs at Asn69. Residues 70-90 traverse the membrane as a helical segment; it reads VSLIMRYATLVTYIINSDTKF. The Cytoplasmic segment spans residues 91–130; it reads ATVLQRSAIQSLNSKLAELYPKTTLDRIYHRVNDHYWTKS. A helical transmembrane segment spans residues 131–151; it reads FVYLVIIYIGSSIMVVIGPII. The Extracellular segment spans residues 152–179; it reads TSIIAYFTHNVFTYMHCYPYFLYDPEKD. The chain crosses the membrane as a helical span at residues 180–200; it reads PVWIYISIYALEWLHSTQMVI. Topologically, residues 201–268 are cytoplasmic; sequence SNIGADIWLL…NDLNGIFGKS (68 aa). A helical transmembrane segment spans residues 269 to 289; it reads LLLSLLTTAAVICTVAVYTLI. Residues 290–295 lie on the Extracellular side of the membrane; it reads QGPTLE. Residues 296–316 traverse the membrane as a helical segment; it reads GFTYVIFIGTSVMQVYLVCYY. The Cytoplasmic portion of the chain corresponds to 317-363; the sequence is GQQVLDLSGEVAHAVYNHDFHDASIAYKRYLLIIIIRAQQPVELNAM. Residues 364–384 form a helical membrane-spanning segment; it reads GYLSISLDTFKQLMSVSYRVI. Residues 385-392 are Extracellular-facing; that stretch reads TMLMQMIQ.

This sequence belongs to the insect chemoreceptor superfamily. Heteromeric odorant receptor channel (TC 1.A.69) family. Or49a subfamily. In terms of assembly, interacts with Orco. Complexes exist early in the endomembrane system in olfactory sensory neurons (OSNs), coupling these complexes to the conserved ciliary trafficking pathway. Expressed in olfactory sensory neurons in the antenna.

The protein localises to the cell membrane. Its function is as follows. Odorant receptor which mediates acceptance or avoidance behavior, depending on its substrates. The odorant receptor repertoire encodes a large collection of odor stimuli that vary widely in identity, intensity, and duration. May form a complex with Orco to form odorant-sensing units, providing sensitive and prolonged odorant signaling and calcium permeability. The chain is Odorant receptor 85f (Or85f) from Drosophila melanogaster (Fruit fly).